A 275-amino-acid chain; its full sequence is Melanoma-associated antigen B5 (275 aa).

A disordered region spans residues 1–33; that stretch reads MTSAGVFNAGSDERANSRDEEYPCSSEVSPSTE. The segment covering 11–21 has biased composition (basic and acidic residues); that stretch reads SDERANSRDEE. Low complexity predominate over residues 23–33; sequence PCSSEVSPSTE. In terms of domain architecture, MAGE spans 40–239; that stretch reads INIKVGLLEQ…GAFSSQYEEA (200 aa).

As to expression, expressed in testis. Not expressed in other normal tissues, but is expressed in tumors of different histological origins.

This Homo sapiens (Human) protein is Melanoma-associated antigen B5 (MAGEB5).